We begin with the raw amino-acid sequence, 346 residues long: Holliday junction branch migration complex subunit RuvB (346 aa).

The interval 1–181 is large ATPase domain (RuvB-L); sequence MSDRNPLIDA…FGIPTRLNFY (181 aa). Residues leucine 20, arginine 21, glycine 62, lysine 65, threonine 66, threonine 67, 128–130, arginine 171, tyrosine 181, and arginine 218 contribute to the ATP site; that span reads EDF. Threonine 66 contacts Mg(2+). Positions 182–252 are small ATPAse domain (RuvB-S); that stretch reads TVEELEYIVR…IADEALSRLE (71 aa). The segment at 255–346 is head domain (RuvB-H); the sequence is NRGLDQLDRR…SQYGLFMEDE (92 aa). 3 residues coordinate DNA: arginine 291, arginine 310, and arginine 315.

The protein belongs to the RuvB family. As to quaternary structure, homohexamer. Forms an RuvA(8)-RuvB(12)-Holliday junction (HJ) complex. HJ DNA is sandwiched between 2 RuvA tetramers; dsDNA enters through RuvA and exits via RuvB. An RuvB hexamer assembles on each DNA strand where it exits the tetramer. Each RuvB hexamer is contacted by two RuvA subunits (via domain III) on 2 adjacent RuvB subunits; this complex drives branch migration. In the full resolvosome a probable DNA-RuvA(4)-RuvB(12)-RuvC(2) complex forms which resolves the HJ.

Its subcellular location is the cytoplasm. It catalyses the reaction ATP + H2O = ADP + phosphate + H(+). In terms of biological role, the RuvA-RuvB-RuvC complex processes Holliday junction (HJ) DNA during genetic recombination and DNA repair, while the RuvA-RuvB complex plays an important role in the rescue of blocked DNA replication forks via replication fork reversal (RFR). RuvA specifically binds to HJ cruciform DNA, conferring on it an open structure. The RuvB hexamer acts as an ATP-dependent pump, pulling dsDNA into and through the RuvAB complex. RuvB forms 2 homohexamers on either side of HJ DNA bound by 1 or 2 RuvA tetramers; 4 subunits per hexamer contact DNA at a time. Coordinated motions by a converter formed by DNA-disengaged RuvB subunits stimulates ATP hydrolysis and nucleotide exchange. Immobilization of the converter enables RuvB to convert the ATP-contained energy into a lever motion, pulling 2 nucleotides of DNA out of the RuvA tetramer per ATP hydrolyzed, thus driving DNA branch migration. The RuvB motors rotate together with the DNA substrate, which together with the progressing nucleotide cycle form the mechanistic basis for DNA recombination by continuous HJ branch migration. Branch migration allows RuvC to scan DNA until it finds its consensus sequence, where it cleaves and resolves cruciform DNA. This is Holliday junction branch migration complex subunit RuvB from Brucella anthropi (strain ATCC 49188 / DSM 6882 / CCUG 24695 / JCM 21032 / LMG 3331 / NBRC 15819 / NCTC 12168 / Alc 37) (Ochrobactrum anthropi).